The following is a 504-amino-acid chain: Cytochrome P450 71B7 (504 aa).

A helical membrane pass occupies residues 1 to 21; it reads MSILLCFLCLLPVFLVSLSIL. A Glycyl lysine isopeptide (Lys-Gly) (interchain with G-Cter in ubiquitin) cross-link involves residue Lys-82. Cys-446 contributes to the heme binding site.

Belongs to the cytochrome P450 family. Requires heme as cofactor. In terms of tissue distribution, highly expressed in rosette leaves. Also expressed in roots, leaves, flowers, and siliques.

It is found in the membrane. The chain is Cytochrome P450 71B7 (CYP71B7) from Arabidopsis thaliana (Mouse-ear cress).